The sequence spans 173 residues: NAD(P)H-quinone oxidoreductase subunit J (173 aa).

The protein belongs to the complex I 30 kDa subunit family. In terms of assembly, NDH-1 can be composed of about 15 different subunits; different subcomplexes with different compositions have been identified which probably have different functions.

The protein localises to the cellular thylakoid membrane. The catalysed reaction is a plastoquinone + NADH + (n+1) H(+)(in) = a plastoquinol + NAD(+) + n H(+)(out). It carries out the reaction a plastoquinone + NADPH + (n+1) H(+)(in) = a plastoquinol + NADP(+) + n H(+)(out). Its function is as follows. NDH-1 shuttles electrons from an unknown electron donor, via FMN and iron-sulfur (Fe-S) centers, to quinones in the respiratory and/or the photosynthetic chain. The immediate electron acceptor for the enzyme in this species is believed to be plastoquinone. Couples the redox reaction to proton translocation, and thus conserves the redox energy in a proton gradient. Cyanobacterial NDH-1 also plays a role in inorganic carbon-concentration. This is NAD(P)H-quinone oxidoreductase subunit J from Prochlorococcus marinus (strain NATL1A).